A 736-amino-acid polypeptide reads, in one-letter code: Catalase-peroxidase 2 (736 aa).

Residues 1 to 23 form the signal peptide; that stretch reads MIKKTLPVLILLALSGSFSTAVA. A cross-link (tryptophyl-tyrosyl-methioninium (Trp-Tyr) (with M-249)) is located at residues 102–223; the sequence is WHGAGTYRTY…LAATQMGLIY (122 aa). H103 acts as the Proton acceptor in catalysis. The segment at residues 223-249 is a cross-link (tryptophyl-tyrosyl-methioninium (Tyr-Met) (with W-102)); the sequence is YVNPEGPGGKPDPLASAKDIREAFSRM. Residue H264 participates in heme b binding.

It belongs to the peroxidase family. Peroxidase/catalase subfamily. Homodimer or homotetramer. Requires heme b as cofactor. Formation of the three residue Trp-Tyr-Met cross-link is important for the catalase, but not the peroxidase activity of the enzyme.

It localises to the periplasm. It catalyses the reaction H2O2 + AH2 = A + 2 H2O. The catalysed reaction is 2 H2O2 = O2 + 2 H2O. In terms of biological role, bifunctional enzyme with both catalase and broad-spectrum peroxidase activity. In Escherichia coli O157:H7, this protein is Catalase-peroxidase 2.